Reading from the N-terminus, the 169-residue chain is Crossover junction endodeoxyribonuclease RuvC (169 aa).

Residues aspartate 11, glutamate 71, and aspartate 143 contribute to the active site. Residues aspartate 11, glutamate 71, and aspartate 143 each contribute to the Mg(2+) site.

This sequence belongs to the RuvC family. As to quaternary structure, homodimer which binds Holliday junction (HJ) DNA. The HJ becomes 2-fold symmetrical on binding to RuvC with unstacked arms; it has a different conformation from HJ DNA in complex with RuvA. In the full resolvosome a probable DNA-RuvA(4)-RuvB(12)-RuvC(2) complex forms which resolves the HJ. Requires Mg(2+) as cofactor.

It is found in the cytoplasm. The catalysed reaction is Endonucleolytic cleavage at a junction such as a reciprocal single-stranded crossover between two homologous DNA duplexes (Holliday junction).. Its function is as follows. The RuvA-RuvB-RuvC complex processes Holliday junction (HJ) DNA during genetic recombination and DNA repair. Endonuclease that resolves HJ intermediates. Cleaves cruciform DNA by making single-stranded nicks across the HJ at symmetrical positions within the homologous arms, yielding a 5'-phosphate and a 3'-hydroxyl group; requires a central core of homology in the junction. The consensus cleavage sequence is 5'-(A/T)TT(C/G)-3'. Cleavage occurs on the 3'-side of the TT dinucleotide at the point of strand exchange. HJ branch migration catalyzed by RuvA-RuvB allows RuvC to scan DNA until it finds its consensus sequence, where it cleaves and resolves the cruciform DNA. The polypeptide is Crossover junction endodeoxyribonuclease RuvC (Rhizobium etli (strain CIAT 652)).